The following is a 512-amino-acid chain: Ammonium transporter 2 (512 aa).

At 1-47 (MSSVNSIPTATSTVYISVLPATATPSGGSGGNVLHEDLNKFYDYGNT) the chain is on the extracellular side. The chain crosses the membrane as a helical span at residues 48–68 (SWILACTPLCLIMVPGVAFFY). At 69–77 (SGLARRKNT) the chain is on the cytoplasmic side. A helical transmembrane segment spans residues 78 to 98 (LALIMLSMLGLCVSFFQWYFW). Residues 99-137 (GYSLAFSQTGTSGYIGNLRHFAFIRTLADYSPGSNNIPE) are Extracellular-facing. A helical transmembrane segment spans residues 138-158 (LVFANFQGMFAAITVALFTGA). The Cytoplasmic segment spans residues 159–167 (AAERGRIGP). A helical transmembrane segment spans residues 168–188 (MLIITFVWLTVVYCPIACWIW). The Extracellular portion of the chain corresponds to 189-201 (NPNGWAFKFGVYD). A helical transmembrane segment spans residues 202–222 (FAGGGPVEVGSGFAALAYTVC). Topologically, residues 223-238 (LGRRSKFVEEQFRPHS) are cytoplasmic. The chain crosses the membrane as a helical span at residues 239–259 (VLNVVLGTSLLWFGWLGFNGG). At 260-267 (SAYGSNLR) the chain is on the extracellular side. The chain crosses the membrane as a helical span at residues 268 to 288 (AAMAITNTNLAGAVAGLVWVI). Over 289–300 (YDYIFRTRKWST) the chain is Cytoplasmic. Residues 301–321 (IGFCSGVVAGLVAATPCAGFV) traverse the membrane as a helical segment. Ser322 is a topological domain (extracellular). The chain crosses the membrane as a helical span at residues 323 to 343 (PHASLAIGAITGLCCNWAIKL). Over 344–354 (KSHMRIDDAMD) the chain is Cytoplasmic. Residues 355–375 (IFAIHGVAGFVGTFLNGLFAV) form a helical membrane-spanning segment. Residues 376 to 406 (DYIAAMDGIYVGENKIRGGWFDHHWRQLGLQ) lie on the Extracellular side of the membrane. The helical transmembrane segment at 407 to 427 (MAYICAVGAYDFVVTFIILFI) threads the bilayer. Over 428-512 (TDKIPYLQLR…TNPLELGLTI (85 aa)) the chain is Cytoplasmic.

It belongs to the ammonia transporter channel (TC 1.A.11.2) family.

It is found in the membrane. Its function is as follows. Transporter for ammonium to use as a nitrogen source. The sequence is that of Ammonium transporter 2 (amt2) from Schizosaccharomyces pombe (strain 972 / ATCC 24843) (Fission yeast).